The sequence spans 319 residues: 4-hydroxy-3-methylbut-2-enyl diphosphate reductase (319 aa).

Cysteine 12 provides a ligand contact to [4Fe-4S] cluster. Residues histidine 41 and histidine 74 each coordinate (2E)-4-hydroxy-3-methylbut-2-enyl diphosphate. The dimethylallyl diphosphate site is built by histidine 41 and histidine 74. Positions 41 and 74 each coordinate isopentenyl diphosphate. Cysteine 97 serves as a coordination point for [4Fe-4S] cluster. Histidine 125 provides a ligand contact to (2E)-4-hydroxy-3-methylbut-2-enyl diphosphate. Histidine 125 provides a ligand contact to dimethylallyl diphosphate. Histidine 125 contributes to the isopentenyl diphosphate binding site. Glutamate 127 acts as the Proton donor in catalysis. Threonine 168 is a (2E)-4-hydroxy-3-methylbut-2-enyl diphosphate binding site. [4Fe-4S] cluster is bound at residue cysteine 198. (2E)-4-hydroxy-3-methylbut-2-enyl diphosphate is bound by residues serine 226, serine 227, asparagine 228, and serine 270. Serine 226, serine 227, asparagine 228, and serine 270 together coordinate dimethylallyl diphosphate. Residues serine 226, serine 227, asparagine 228, and serine 270 each coordinate isopentenyl diphosphate.

This sequence belongs to the IspH family. Homodimer. Requires [4Fe-4S] cluster as cofactor.

The enzyme catalyses isopentenyl diphosphate + 2 oxidized [2Fe-2S]-[ferredoxin] + H2O = (2E)-4-hydroxy-3-methylbut-2-enyl diphosphate + 2 reduced [2Fe-2S]-[ferredoxin] + 2 H(+). The catalysed reaction is dimethylallyl diphosphate + 2 oxidized [2Fe-2S]-[ferredoxin] + H2O = (2E)-4-hydroxy-3-methylbut-2-enyl diphosphate + 2 reduced [2Fe-2S]-[ferredoxin] + 2 H(+). It functions in the pathway isoprenoid biosynthesis; dimethylallyl diphosphate biosynthesis; dimethylallyl diphosphate from (2E)-4-hydroxy-3-methylbutenyl diphosphate: step 1/1. The protein operates within isoprenoid biosynthesis; isopentenyl diphosphate biosynthesis via DXP pathway; isopentenyl diphosphate from 1-deoxy-D-xylulose 5-phosphate: step 6/6. Functionally, catalyzes the conversion of 1-hydroxy-2-methyl-2-(E)-butenyl 4-diphosphate (HMBPP) into a mixture of isopentenyl diphosphate (IPP) and dimethylallyl diphosphate (DMAPP). Acts in the terminal step of the DOXP/MEP pathway for isoprenoid precursor biosynthesis. This Hamiltonella defensa subsp. Acyrthosiphon pisum (strain 5AT) protein is 4-hydroxy-3-methylbut-2-enyl diphosphate reductase.